The chain runs to 297 residues: MGFVKVVKNKQYFKRFQVKYKRRREGKTDYYARKRLTVQDKSKYNTPKYRLIVRLSNKDITCQIAYSRIEGDRIVCAAYSHELPKYGIKVGLTNYAAAYCTGLLLARRLLKQLKLDTLYTGTTEVDGDEYNVEEHDDGPGAFRCYLDTGLMRTTTGARIFGAMKGAVDGGLNIPHSTKRFPGYDNESKSFNADVHRQHIFAHHIANYMKTLEENEPENFQRQFSQYIKNGITADGIEEMYKKAHEAIRADPDRAEIVKTKEPVKKRWNRAKLTLSERKDRVKQIKASFQKKLEETEA.

It belongs to the universal ribosomal protein uL18 family. Component of the large ribosomal subunit (LSU).

It is found in the cytoplasm. It localises to the nucleus. Functionally, component of the ribosome, a large ribonucleoprotein complex responsible for the synthesis of proteins in the cell. The small ribosomal subunit (SSU) binds messenger RNAs (mRNAs) and translates the encoded message by selecting cognate aminoacyl-transfer RNA (tRNA) molecules. The large subunit (LSU) contains the ribosomal catalytic site termed the peptidyl transferase center (PTC), which catalyzes the formation of peptide bonds, thereby polymerizing the amino acids delivered by tRNAs into a polypeptide chain. The nascent polypeptides leave the ribosome through a tunnel in the LSU and interact with protein factors that function in enzymatic processing, targeting, and the membrane insertion of nascent chains at the exit of the ribosomal tunnel. This is Large ribosomal subunit protein uL18 (RpL5) from Lysiphlebus testaceipes (Greenbugs aphid parastoid).